We begin with the raw amino-acid sequence, 422 residues long: Tyrosine--tRNA ligase 1 (422 aa).

An L-tyrosine-binding site is contributed by Tyr35. The 'HIGH' region motif lies at 40–49 (PTADSLHIGH). L-tyrosine contacts are provided by Tyr170 and Gln174. The short motif at 232-236 (KFGKT) is the 'KMSKS' region element. Lys235 contributes to the ATP binding site. One can recognise an S4 RNA-binding domain in the interval 355–421 (LSLVDVLVQS…GKKKYFLVTY (67 aa)).

This sequence belongs to the class-I aminoacyl-tRNA synthetase family. TyrS type 1 subfamily. As to quaternary structure, homodimer.

It is found in the cytoplasm. The catalysed reaction is tRNA(Tyr) + L-tyrosine + ATP = L-tyrosyl-tRNA(Tyr) + AMP + diphosphate + H(+). Its function is as follows. Catalyzes the attachment of tyrosine to tRNA(Tyr) in a two-step reaction: tyrosine is first activated by ATP to form Tyr-AMP and then transferred to the acceptor end of tRNA(Tyr). This is Tyrosine--tRNA ligase 1 from Bacillus subtilis (strain 168).